The chain runs to 353 residues: uncharacterized protein (353 aa).

The N-terminal stretch at 1-24 is a signal peptide; it reads MRVVKRIAVACYLGITIFSGIAFG.

The protein belongs to the chlamydial CPn_1058/CT_355/TC_0634 family.

This is an uncharacterized protein from Chlamydia muridarum (strain MoPn / Nigg).